Reading from the N-terminus, the 526-residue chain is Light-independent protochlorophyllide reductase subunit B (526 aa).

Residue Asp36 coordinates [4Fe-4S] cluster. Residue Asp290 is the Proton donor of the active site. Gly425–Leu426 serves as a coordination point for substrate.

Belongs to the ChlB/BchB/BchZ family. As to quaternary structure, protochlorophyllide reductase is composed of three subunits; ChlL, ChlN and ChlB. Forms a heterotetramer of two ChlB and two ChlN subunits. [4Fe-4S] cluster serves as cofactor.

It carries out the reaction chlorophyllide a + oxidized 2[4Fe-4S]-[ferredoxin] + 2 ADP + 2 phosphate = protochlorophyllide a + reduced 2[4Fe-4S]-[ferredoxin] + 2 ATP + 2 H2O. The protein operates within porphyrin-containing compound metabolism; chlorophyll biosynthesis (light-independent). Functionally, component of the dark-operative protochlorophyllide reductase (DPOR) that uses Mg-ATP and reduced ferredoxin to reduce ring D of protochlorophyllide (Pchlide) to form chlorophyllide a (Chlide). This reaction is light-independent. The NB-protein (ChlN-ChlB) is the catalytic component of the complex. This Prochlorococcus marinus (strain MIT 9515) protein is Light-independent protochlorophyllide reductase subunit B.